The primary structure comprises 620 residues: DNA primase (620 aa).

Residues C38–C62 form a CHC2-type zinc finger. The Toprim domain occupies L266 to A350. Mg(2+) is bound by residues E272, D319, and D321.

This sequence belongs to the DnaG primase family. Monomer. Interacts with DnaB. Zn(2+) is required as a cofactor. Mg(2+) serves as cofactor.

The catalysed reaction is ssDNA + n NTP = ssDNA/pppN(pN)n-1 hybrid + (n-1) diphosphate.. RNA polymerase that catalyzes the synthesis of short RNA molecules used as primers for DNA polymerase during DNA replication. The chain is DNA primase from Mycoplasma pneumoniae (strain ATCC 29342 / M129 / Subtype 1) (Mycoplasmoides pneumoniae).